A 224-amino-acid polypeptide reads, in one-letter code: Paired immunoglobulin-like type 2 receptor beta (224 aa).

The signal sequence occupies residues 1 to 28; it reads MALLISLPGGTPAMAQVLLLLSSGCLHA. The Extracellular portion of the chain corresponds to 29–195; sequence GNSERYNRKN…NPSLMNLGAM (167 aa). N-linked (GlcNAc...) asparagine glycans are attached at residues N90, N107, and N154. A helical membrane pass occupies residues 196-216; that stretch reads VTMLLAKVLVIVLVYGWMIFL. The Cytoplasmic portion of the chain corresponds to 217–224; that stretch reads RWKQRPAH.

As to quaternary structure, interacts with CD99. Probably associates with DAP12. As to expression, widely expressed with highest levels in spleen, liver and lung. Predominantly expressed by natural killer cells, macrophages, and granulocytes and dendritic cells (BM-DC).

The protein resides in the membrane. Its function is as follows. Paired receptors consist of highly related activating and inhibitory receptors and are widely involved in the regulation of the immune system. PILRB is thought to act as a cellular signaling activating receptor that associates with ITAM-bearing adapter molecules on the cell surface. Seems to associate with DAP12 and is a receptor for CD99. May be involved in target cell recognition by natural killer cells and in activation of dendritic cells. This Mus musculus (Mouse) protein is Paired immunoglobulin-like type 2 receptor beta (Pilrb).